The primary structure comprises 272 residues: MSQVVQSRRLRAIDIGKRKAEGRKIIALTAYHAHTAGIVDPYCDFILVGDSLGMVMHGMESTIPVTLEMMILQAQAVIRGTEKALVVVDMPFGSYEASREQAFLNASRVLKETGAGAIKMEGGAHFAETVAFLVQRGVPVMGHIGLTPQAVNTMGGFKVQGRGPDDERRLLEDARAISEAGAFAIVLEGIVEPVARAIASSPRVTAATIGIGASAVCDGQILVLEDMLGLSERTPKFVRQFGSLRTHIEDAVKAYADEVRAGRFPADDHTYG.

Mg(2+) is bound by residues D50 and D89. 3-methyl-2-oxobutanoate-binding positions include 50–51 (DS), D89, and K119. E121 contributes to the Mg(2+) binding site. The active-site Proton acceptor is E188.

The protein belongs to the PanB family. Homodecamer; pentamer of dimers. The cofactor is Mg(2+).

It localises to the cytoplasm. It catalyses the reaction 3-methyl-2-oxobutanoate + (6R)-5,10-methylene-5,6,7,8-tetrahydrofolate + H2O = 2-dehydropantoate + (6S)-5,6,7,8-tetrahydrofolate. Its pathway is cofactor biosynthesis; (R)-pantothenate biosynthesis; (R)-pantoate from 3-methyl-2-oxobutanoate: step 1/2. Its function is as follows. Catalyzes the reversible reaction in which hydroxymethyl group from 5,10-methylenetetrahydrofolate is transferred onto alpha-ketoisovalerate to form ketopantoate. The protein is 3-methyl-2-oxobutanoate hydroxymethyltransferase of Methylobacterium radiotolerans (strain ATCC 27329 / DSM 1819 / JCM 2831 / NBRC 15690 / NCIMB 10815 / 0-1).